A 173-amino-acid chain; its full sequence is NADH-quinone oxidoreductase subunit B (173 aa).

[4Fe-4S] cluster-binding residues include cysteine 52, cysteine 53, cysteine 117, and cysteine 147.

This sequence belongs to the complex I 20 kDa subunit family. As to quaternary structure, NDH-1 is composed of 14 different subunits. Subunits NuoB, C, D, E, F, and G constitute the peripheral sector of the complex. The cofactor is [4Fe-4S] cluster.

The protein localises to the cell inner membrane. It catalyses the reaction a quinone + NADH + 5 H(+)(in) = a quinol + NAD(+) + 4 H(+)(out). NDH-1 shuttles electrons from NADH, via FMN and iron-sulfur (Fe-S) centers, to quinones in the respiratory chain. Couples the redox reaction to proton translocation (for every two electrons transferred, four hydrogen ions are translocated across the cytoplasmic membrane), and thus conserves the redox energy in a proton gradient. This is NADH-quinone oxidoreductase subunit B from Pelagibacter ubique (strain HTCC1062).